Reading from the N-terminus, the 392-residue chain is Phosphoglycerate kinase (392 aa).

Residues 21-23 (DLN), Arg36, 59-62 (HLGR), Arg114, and Arg147 each bind substrate. ATP is bound by residues Lys198, Glu320, and 346–349 (GGDT).

The protein belongs to the phosphoglycerate kinase family. Monomer.

Its subcellular location is the cytoplasm. It catalyses the reaction (2R)-3-phosphoglycerate + ATP = (2R)-3-phospho-glyceroyl phosphate + ADP. The protein operates within carbohydrate degradation; glycolysis; pyruvate from D-glyceraldehyde 3-phosphate: step 2/5. In Nitrosomonas eutropha (strain DSM 101675 / C91 / Nm57), this protein is Phosphoglycerate kinase.